Reading from the N-terminus, the 876-residue chain is Alanine--tRNA ligase (876 aa).

Residues histidine 564, histidine 568, cysteine 666, and histidine 670 each contribute to the Zn(2+) site.

The protein belongs to the class-II aminoacyl-tRNA synthetase family. As to quaternary structure, homotetramer. Zn(2+) serves as cofactor.

It is found in the cytoplasm. It catalyses the reaction tRNA(Ala) + L-alanine + ATP = L-alanyl-tRNA(Ala) + AMP + diphosphate. Catalyzes the attachment of alanine to tRNA(Ala) in a two-step reaction: alanine is first activated by ATP to form Ala-AMP and then transferred to the acceptor end of tRNA(Ala). Also edits incorrectly charged Ser-tRNA(Ala) and Gly-tRNA(Ala) via its editing domain. The chain is Alanine--tRNA ligase from Salmonella typhi.